The primary structure comprises 146 residues: MIF-like protein mif-3 (146 aa).

Belongs to the MIF family.

The polypeptide is MIF-like protein mif-3 (mif-3) (Caenorhabditis elegans).